Here is a 221-residue protein sequence, read N- to C-terminus: Very-long-chain (3R)-3-hydroxyacyl-CoA dehydratase PASTICCINO 2A (221 aa).

The Cytoplasmic portion of the chain corresponds to 1-11; that stretch reads MAGVGSAVRRL. The helical transmembrane segment at 12-32 threads the bilayer; sequence YLSVYNWAVFFGWAQVLYYAV. The Lumenal segment spans residues 33–51; that stretch reads TTLLESGHEAVYAAVERPL. Residues 52-70 form a helical membrane-spanning segment; the sequence is QFAQTAAFLEILHGLVGLV. Topologically, residues 71–76 are cytoplasmic; the sequence is RSPVSA. A helical transmembrane segment spans residues 77–95; that stretch reads TLPQIGSRLFLTWGILWSF. Over 96–100 the chain is Lumenal; that stretch reads PETHS. A helical transmembrane segment spans residues 101–121; sequence HILVTSLVISWSITEIIRYSF. At 122-141 the chain is on the cytoplasmic side; the sequence is FGMKEAFGFAPSWLLWLRYS. The helical transmembrane segment at 142-165 threads the bilayer; it reads TFMVLYPTGISSEVGLIYIALPYM. Residues Tyr147 and Glu154 contribute to the active site. The Lumenal portion of the chain corresponds to 166–184; it reads KASEKYCLRMPNKWNFSFD. Residues 185–209 traverse the membrane as a helical segment; that stretch reads FFYASILSLAIYVPGSPHMFTYMLA. Topologically, residues 210–221 are cytoplasmic; it reads QRKKALAKAKAA.

Belongs to the very long-chain fatty acids dehydratase HACD family.

Its subcellular location is the endoplasmic reticulum membrane. It catalyses the reaction a very-long-chain (3R)-3-hydroxyacyl-CoA = a very-long-chain (2E)-enoyl-CoA + H2O. The protein operates within lipid metabolism; fatty acid biosynthesis. Catalyzes the third of the four reactions of the long-chain fatty acids elongation cycle. This endoplasmic reticulum-bound enzymatic process, allows the addition of two carbons to the chain of long- and very long-chain fatty acids/VLCFAs per cycle. This enzyme catalyzes the dehydration of the 3-hydroxyacyl-CoA intermediate into trans-2,3-enoyl-CoA, within each cycle of fatty acid elongation. Thereby, it participates in the production of VLCFAs of different chain lengths that are involved in multiple biological processes as precursors of membrane lipids and lipid mediators. May be an anti-phosphatase that prevents CDKA-1 dephosphorylation and activation. Involved in the hormonal control of cell division and differentiation. Required for proliferation control of meristematic and non-meristematic cells. Negative regulator of the cell cycle. This chain is Very-long-chain (3R)-3-hydroxyacyl-CoA dehydratase PASTICCINO 2A (PAS2A), found in Oryza sativa subsp. japonica (Rice).